Here is a 1169-residue protein sequence, read N- to C-terminus: DNA repair protein RAD5 (1169 aa).

At S2 the chain carries N-acetylserine. S20, S23, S129, and S130 each carry phosphoserine. The span at 302–317 shows a compositional bias: basic and acidic residues; sequence MKRRRTEGGNKREKDN. A disordered region spans residues 302-327; it reads MKRRRTEGGNKREKDNGNFGRTLTET. The 212-residue stretch at 519 to 730 folds into the Helicase ATP-binding domain; the sequence is PILKTMIKGG…YSLVKFLELD (212 aa). 532 to 539 provides a ligand contact to ATP; the sequence is DEMGLGKT. The short motif at 681 to 684 is the DEGH box element; that stretch reads DEGH. Residues 914-961 form an RING-type zinc finger; sequence CSICTTEPMDLDKALFTECGHSFCEKCLFEYIEFQNSKNLGLKCPNCR. The Helicase C-terminal domain occupies 995 to 1165; it reads KITALLKELQ…RRKRRIEEIQ (171 aa).

It belongs to the SNF2/RAD54 helicase family. Homodimer. Interacts with POL30, RAD18, UBC9 and UBC13. Mg(2+) is required as a cofactor. Mn(2+) serves as cofactor. It depends on Ca(2+) as a cofactor.

Its subcellular location is the cytoplasm. The protein localises to the nucleus. Probable helicase, member of the UBC2/RAD6 epistasis group. Functions with the DNA repair protein RAD18 in error-free postreplication DNA repair. Involved in the maintenance of wild-type rates of instability of simple repetitive sequences such as poly(GT) repeats. Seems to be involved in maintaining a balance which acts in favor of error-prone non-homologous joining during DNA double-strand breaks repairs. Recruits the UBC13-MMS2 dimer to chromatin for DNA repair. The polypeptide is DNA repair protein RAD5 (RAD5) (Saccharomyces cerevisiae (strain ATCC 204508 / S288c) (Baker's yeast)).